The primary structure comprises 150 residues: Endoribonuclease YbeY (150 aa).

Zn(2+) contacts are provided by His-102, His-106, and His-112.

This sequence belongs to the endoribonuclease YbeY family. Requires Zn(2+) as cofactor.

It is found in the cytoplasm. Functionally, single strand-specific metallo-endoribonuclease involved in late-stage 70S ribosome quality control and in maturation of the 3' terminus of the 16S rRNA. In Thermotoga petrophila (strain ATCC BAA-488 / DSM 13995 / JCM 10881 / RKU-1), this protein is Endoribonuclease YbeY.